The following is a 303-amino-acid chain: Oxygen-dependent coproporphyrinogen-III oxidase (303 aa).

Ser93 is a substrate binding site. Residues His97 and His107 each coordinate a divalent metal cation. The active-site Proton donor is His107. A substrate-binding site is contributed by 109-111; it reads NVR. A divalent metal cation-binding residues include His146 and His176. The important for dimerization stretch occupies residues 241-276; sequence YVEFNLVYDRGTLFGLQSGGRTESILMSLPPQVRWG. 259–261 lines the substrate pocket; it reads GGR.

This sequence belongs to the aerobic coproporphyrinogen-III oxidase family. Homodimer. A divalent metal cation serves as cofactor.

It is found in the cytoplasm. It carries out the reaction coproporphyrinogen III + O2 + 2 H(+) = protoporphyrinogen IX + 2 CO2 + 2 H2O. The protein operates within porphyrin-containing compound metabolism; protoporphyrin-IX biosynthesis; protoporphyrinogen-IX from coproporphyrinogen-III (O2 route): step 1/1. Functionally, involved in the heme biosynthesis. Catalyzes the aerobic oxidative decarboxylation of propionate groups of rings A and B of coproporphyrinogen-III to yield the vinyl groups in protoporphyrinogen-IX. In Pseudomonas putida (strain ATCC 700007 / DSM 6899 / JCM 31910 / BCRC 17059 / LMG 24140 / F1), this protein is Oxygen-dependent coproporphyrinogen-III oxidase.